A 225-amino-acid chain; its full sequence is Superantigen-like protein 11 (225 aa).

Positions Met1–Ala30 are cleaved as a signal peptide. The segment at Val94–Tyr196 is sialyl Lewis X-binding.

This sequence belongs to the staphylococcal/streptococcal toxin family. As to quaternary structure, homodimer (via its C-terminal domain). Interacts with host FCAR and SELPLG (via sialyl Lewis X).

The protein localises to the secreted. Its function is as follows. Secreted protein that plays a role in the inhibition of host immune system. Targets myeloid cells such as monocytes or granulocytes through binding with sialyllactosamine-containing glycoproteins. Prevents initial rolling of neutrophils toward the site of infection by interacting with host SELPLG. Disrupts neutrophil motility by induction of cell adhesion via interacting with glycans but independently of SELPLG. The polypeptide is Superantigen-like protein 11 (Staphylococcus aureus (strain Newman)).